Here is a 103-residue protein sequence, read N- to C-terminus: Large ribosomal subunit protein bL21 (103 aa).

It belongs to the bacterial ribosomal protein bL21 family. In terms of assembly, part of the 50S ribosomal subunit. Contacts protein L20.

Functionally, this protein binds to 23S rRNA in the presence of protein L20. This is Large ribosomal subunit protein bL21 from Aeromonas hydrophila subsp. hydrophila (strain ATCC 7966 / DSM 30187 / BCRC 13018 / CCUG 14551 / JCM 1027 / KCTC 2358 / NCIMB 9240 / NCTC 8049).